The chain runs to 710 residues: MVKRASFCLLSCLIILFLSSVSAIIYDPQDKQVYVVYMGSLPSQPNYTPMSNHINILQEVTGESSIEGRLVRSYKRSFNGFSALLTESEREGVAEMEGVVSVFRSKNYKLQTTASWDFMGMKEGKNTKRNFAVESDTIIGFIDSGIWPESESFSDKGFGPPPKKWKGVCKGGKNFTCNNKLIGARDYTSEGTRDLQGHGTHTTSTAAGNAVADTSFFGIGNGTARGGVPASRVAAYKVCTITGCSDDNVLSAFDDAIADGVDLISVSLGGDYPSLYAEDTIAIGAFHAMAKGILTVHSAGNAGPNPTTVVSVAPWMLTVAATTTNRRFLTKVVLGNGKTLVGKSVNAFDLKGKKYPLEYGDYLNESLVKGKILVSRYLSGSEVAVSFITTDNKDYASISSRPLSVLSQDDFDSLVSYINSTRSPQGSVLKTEAIFNQLSPKVASFSSRGPNTIAVDILKPDISAPGVEILAAYSPLSLPSEDRRDKRRVKYSVLSGTSMACPHVTGVAAYIKTFHPDWSPSVIQSAIMTTAWQMNATGTGAESTEFAYGAGHVDPIAAINPGLVYELNKTDHISFLCGMNYTSKTLKLISGDAVICSGKTLQRNLNYPSMSAKLSESNSSFTVTFKRTVTNLGTANSTYKSKIVLNHGSKLNVKVSPSVLSMKSLKEKQSFTVTVSGSNIDPKLPSSANLIWSDGTHNVRSPIVVYIDGY.

The N-terminal stretch at 1–23 is a signal peptide; that stretch reads MVKRASFCLLSCLIILFLSSVSA. Residues 24-111 constitute a propeptide, activation peptide; that stretch reads IIYDPQDKQV…VFRSKNYKLQ (88 aa). Residues 33–110 form the Inhibitor I9 domain; it reads VYVVYMGSLP…SVFRSKNYKL (78 aa). Residues 115–559 form the Peptidase S8 domain; sequence SWDFMGMKEG…AGHVDPIAAI (445 aa). Asp143 functions as the Charge relay system in the catalytic mechanism. Asn174 carries N-linked (GlcNAc...) asparagine glycosylation. His198 functions as the Charge relay system in the catalytic mechanism. 3 N-linked (GlcNAc...) asparagine glycosylation sites follow: Asn221, Asn364, and Asn419. Residues 354–414 form the PA domain; sequence KYPLEYGDYL…VLSQDDFDSL (61 aa). Ser498 (charge relay system) is an active-site residue. N-linked (GlcNAc...) asparagine glycans are attached at residues Asn535, Asn568, Asn580, Asn618, and Asn636.

It belongs to the peptidase S8 family. In terms of processing, the C-terminal propeptide is autocleaved.

It localises to the secreted. This is Subtilisin-like protease SBT4.8 from Arabidopsis thaliana (Mouse-ear cress).